Here is a 708-residue protein sequence, read N- to C-terminus: Ion-translocating oxidoreductase complex subunit C (708 aa).

4Fe-4S ferredoxin-type domains follow at residues 369-397 (GEPQ…QQLY) and 407-436 (KATT…VQYF). [4Fe-4S] cluster contacts are provided by cysteine 377, cysteine 380, cysteine 383, cysteine 387, cysteine 416, cysteine 419, cysteine 422, and cysteine 426. The tract at residues 599 to 686 (KARKLEQQQS…EEQVDPRKAA (88 aa)) is disordered.

Belongs to the 4Fe4S bacterial-type ferredoxin family. RnfC subfamily. As to quaternary structure, the complex is composed of six subunits: RsxA, RsxB, RsxC, RsxD, RsxE and RsxG. Requires [4Fe-4S] cluster as cofactor.

The protein localises to the cell inner membrane. Its function is as follows. Part of a membrane-bound complex that couples electron transfer with translocation of ions across the membrane. Required to maintain the reduced state of SoxR. The chain is Ion-translocating oxidoreductase complex subunit C from Escherichia coli (strain 55989 / EAEC).